The sequence spans 357 residues: Probable leucine aminopeptidase ARB_00576 (357 aa).

Positions 1–15 (MKVLAALALSALAMA) are cleaved as a signal peptide. An N-linked (GlcNAc...) asparagine glycan is attached at Asn76. His167 and Asp185 together coordinate Zn(2+). The disordered stretch occupies residues 169–188 (DSINGNNPQGEAPGADDNGS). A glycan (N-linked (GlcNAc...) asparagine) is linked at Asn186. Zn(2+) contacts are provided by Glu224 and Asp251. The N-linked (GlcNAc...) asparagine glycan is linked to Asn269. A disulfide bond links Cys291 and Cys295. Zn(2+) is bound at residue His324.

This sequence belongs to the peptidase M28 family. M28E subfamily. In terms of assembly, monomer. Requires Zn(2+) as cofactor.

The protein resides in the secreted. Its function is as follows. Probable extracellular aminopeptidase which contributes to pathogenicity. The sequence is that of Probable leucine aminopeptidase ARB_00576 from Arthroderma benhamiae (strain ATCC MYA-4681 / CBS 112371) (Trichophyton mentagrophytes).